A 323-amino-acid polypeptide reads, in one-letter code: Cytochrome c biogenesis protein CcsA (323 aa).

A run of 8 helical transmembrane segments spans residues 17–37, 44–64, 68–88, 98–118, 143–163, 229–249, 262–279, and 291–311; these read VVSI…IVGF, GMII…FFSG, FSDL…FYMV, LSTI…SGLL, MILG…ILVI, IISL…VWAN, ETWA…LHSR, and IVAS…NLLG.

This sequence belongs to the CcmF/CycK/Ccl1/NrfE/CcsA family. In terms of assembly, may interact with Ccs1.

It localises to the plastid. It is found in the chloroplast thylakoid membrane. In terms of biological role, required during biogenesis of c-type cytochromes (cytochrome c6 and cytochrome f) at the step of heme attachment. The polypeptide is Cytochrome c biogenesis protein CcsA (Lotus japonicus (Lotus corniculatus var. japonicus)).